The primary structure comprises 124 residues: Small ribosomal subunit protein eS6 (124 aa).

This sequence belongs to the eukaryotic ribosomal protein eS6 family.

The sequence is that of Small ribosomal subunit protein eS6 from Methanococcus maripaludis (strain C5 / ATCC BAA-1333).